A 521-amino-acid chain; its full sequence is Bifunctional purine biosynthesis protein PurH (521 aa).

Residues 1-145 (MIKQALISVS…KNHRDVTVVV (145 aa)) enclose the MGS-like domain.

Belongs to the PurH family.

It catalyses the reaction (6R)-10-formyltetrahydrofolate + 5-amino-1-(5-phospho-beta-D-ribosyl)imidazole-4-carboxamide = 5-formamido-1-(5-phospho-D-ribosyl)imidazole-4-carboxamide + (6S)-5,6,7,8-tetrahydrofolate. It carries out the reaction IMP + H2O = 5-formamido-1-(5-phospho-D-ribosyl)imidazole-4-carboxamide. Its pathway is purine metabolism; IMP biosynthesis via de novo pathway; 5-formamido-1-(5-phospho-D-ribosyl)imidazole-4-carboxamide from 5-amino-1-(5-phospho-D-ribosyl)imidazole-4-carboxamide (10-formyl THF route): step 1/1. It participates in purine metabolism; IMP biosynthesis via de novo pathway; IMP from 5-formamido-1-(5-phospho-D-ribosyl)imidazole-4-carboxamide: step 1/1. This Paraburkholderia phymatum (strain DSM 17167 / CIP 108236 / LMG 21445 / STM815) (Burkholderia phymatum) protein is Bifunctional purine biosynthesis protein PurH.